The following is a 269-amino-acid chain: Phosphate import ATP-binding protein PstB (269 aa).

The ABC transporter domain occupies 14-253; that stretch reads LSLENVSISY…EFNSTKKIFN (240 aa). 46 to 53 contributes to the ATP binding site; it reads GPSGCGKS.

The protein belongs to the ABC transporter superfamily. Phosphate importer (TC 3.A.1.7) family. The complex is composed of two ATP-binding proteins (PstB), two transmembrane proteins (PstC and PstA) and a solute-binding protein (PstS).

It is found in the cell inner membrane. The catalysed reaction is phosphate(out) + ATP + H2O = ADP + 2 phosphate(in) + H(+). In terms of biological role, part of the ABC transporter complex PstSACB involved in phosphate import. Responsible for energy coupling to the transport system. The chain is Phosphate import ATP-binding protein PstB from Prochlorococcus marinus (strain MIT 9312).